The chain runs to 419 residues: Esterase FrsA (419 aa).

This sequence belongs to the FrsA family.

It carries out the reaction a carboxylic ester + H2O = an alcohol + a carboxylate + H(+). Its function is as follows. Catalyzes the hydrolysis of esters. This Photobacterium profundum (strain SS9) protein is Esterase FrsA.